We begin with the raw amino-acid sequence, 308 residues long: Cytochrome b (308 aa).

4 helical membrane-spanning segments follow: residues 1 to 21, 45 to 66, 81 to 101, and 146 to 166; these read FGSL…LLAT, WLIR…YLHI, WNTG…GYVL, and FFAL…VHLT. 2 residues coordinate heme b: His-51 and His-65. 2 residues coordinate heme b: His-150 and His-164. Residue His-169 coordinates a ubiquinone. Helical transmembrane passes span 194–214, 256–276, and 288–308; these read MKDI…ALFS, LGGV…PLLH, and LSQI…WVGS.

The protein belongs to the cytochrome b family. As to quaternary structure, the cytochrome bc1 complex contains 11 subunits: 3 respiratory subunits (MT-CYB, CYC1 and UQCRFS1), 2 core proteins (UQCRC1 and UQCRC2) and 6 low-molecular weight proteins (UQCRH/QCR6, UQCRB/QCR7, UQCRQ/QCR8, UQCR10/QCR9, UQCR11/QCR10 and a cleavage product of UQCRFS1). This cytochrome bc1 complex then forms a dimer. Heme b is required as a cofactor.

It localises to the mitochondrion inner membrane. In terms of biological role, component of the ubiquinol-cytochrome c reductase complex (complex III or cytochrome b-c1 complex) that is part of the mitochondrial respiratory chain. The b-c1 complex mediates electron transfer from ubiquinol to cytochrome c. Contributes to the generation of a proton gradient across the mitochondrial membrane that is then used for ATP synthesis. The chain is Cytochrome b (MT-CYB) from Amblyornis macgregoriae (Macgregor's bowerbird).